Here is a 466-residue protein sequence, read N- to C-terminus: Peptidyl-prolyl cis-trans isomerase CYP37, chloroplastic (466 aa).

Residues 1-65 (MASPLSSSTV…GTKELIHSCN (65 aa)) constitute a chloroplast transit peptide. The transit peptide at 66–114 (SSIDSKLNTFEAGSKNLEKLVATILIFVQVWSPLPLFGLDSAYISPAEA) directs the protein to the thylakoid. The PPIase cyclophilin-type domain maps to 278–466 (TFSAEAGGDQ…VQNNNINEST (189 aa)).

In terms of tissue distribution, aerial parts.

The protein localises to the plastid. The protein resides in the chloroplast thylakoid lumen. The enzyme catalyses [protein]-peptidylproline (omega=180) = [protein]-peptidylproline (omega=0). In terms of biological role, PPIases accelerate the folding of proteins. It catalyzes the cis-trans isomerization of proline imidic peptide bonds in oligopeptides. This Arabidopsis thaliana (Mouse-ear cress) protein is Peptidyl-prolyl cis-trans isomerase CYP37, chloroplastic (CYP37).